The sequence spans 280 residues: Ribonuclease Z (280 aa).

Zn(2+)-binding residues include H61, H63, D65, H66, H153, D176, and H240. D65 (proton acceptor) is an active-site residue.

It belongs to the RNase Z family. Homodimer. Zn(2+) serves as cofactor.

It catalyses the reaction Endonucleolytic cleavage of RNA, removing extra 3' nucleotides from tRNA precursor, generating 3' termini of tRNAs. A 3'-hydroxy group is left at the tRNA terminus and a 5'-phosphoryl group is left at the trailer molecule.. Its function is as follows. Zinc phosphodiesterase, which displays some tRNA 3'-processing endonuclease activity. Probably involved in tRNA maturation, by removing a 3'-trailer from precursor tRNA. The sequence is that of Ribonuclease Z from Mycolicibacterium paratuberculosis (strain ATCC BAA-968 / K-10) (Mycobacterium paratuberculosis).